The sequence spans 126 residues: Holo-[acyl-carrier-protein] synthase (126 aa).

Residues Asp8 and Glu60 each coordinate Mg(2+).

Belongs to the P-Pant transferase superfamily. AcpS family. Requires Mg(2+) as cofactor.

It localises to the cytoplasm. It catalyses the reaction apo-[ACP] + CoA = holo-[ACP] + adenosine 3',5'-bisphosphate + H(+). In terms of biological role, transfers the 4'-phosphopantetheine moiety from coenzyme A to a Ser of acyl-carrier-protein. This chain is Holo-[acyl-carrier-protein] synthase, found in Ehrlichia canis (strain Jake).